The chain runs to 60 residues: uncharacterized protein (60 aa).

The helical transmembrane segment at 14 to 34 threads the bilayer; it reads MLFLGTIGLAVVVGGLMAYGY. The interval 38-60 is disordered; sequence GKTPSSGTSFHTASPSFSSRYRY. The segment covering 40–60 has biased composition (polar residues); the sequence is TPSSGTSFHTASPSFSSRYRY.

Its subcellular location is the host membrane. This is an uncharacterized protein from Dryophytes versicolor (chameleon treefrog).